The sequence spans 208 residues: Superoxide dismutase [Mn] (208 aa).

Mn(2+) is bound by residues His-27, His-81, Asp-168, and His-172.

This sequence belongs to the iron/manganese superoxide dismutase family. In terms of assembly, homodimer. The cofactor is Mn(2+).

It carries out the reaction 2 superoxide + 2 H(+) = H2O2 + O2. In terms of biological role, destroys superoxide anion radicals which are normally produced within the cells and which are toxic to biological systems. This chain is Superoxide dismutase [Mn] (sodA), found in Buchnera aphidicola subsp. Baizongia pistaciae (strain Bp).